The primary structure comprises 362 residues: Cobalt-precorrin-5B C(1)-methyltransferase (362 aa).

The protein belongs to the CbiD family.

The enzyme catalyses Co-precorrin-5B + S-adenosyl-L-methionine = Co-precorrin-6A + S-adenosyl-L-homocysteine. It functions in the pathway cofactor biosynthesis; adenosylcobalamin biosynthesis; cob(II)yrinate a,c-diamide from sirohydrochlorin (anaerobic route): step 6/10. In terms of biological role, catalyzes the methylation of C-1 in cobalt-precorrin-5B to form cobalt-precorrin-6A. This is Cobalt-precorrin-5B C(1)-methyltransferase from Burkholderia lata (strain ATCC 17760 / DSM 23089 / LMG 22485 / NCIMB 9086 / R18194 / 383).